A 120-amino-acid chain; its full sequence is Large ribosomal subunit protein uL18 (120 aa).

It belongs to the universal ribosomal protein uL18 family. As to quaternary structure, part of the 50S ribosomal subunit; part of the 5S rRNA/L5/L18/L25 subcomplex. Contacts the 5S and 23S rRNAs.

This is one of the proteins that bind and probably mediate the attachment of the 5S RNA into the large ribosomal subunit, where it forms part of the central protuberance. This Herminiimonas arsenicoxydans protein is Large ribosomal subunit protein uL18.